The chain runs to 284 residues: Efem/EfeO family lipoprotein (284 aa).

Positions 1-17 are cleaved as a signal peptide; the sequence is MKKLTTLLLASTLLIAA. A lipid anchor (N-palmitoyl cysteine) is attached at Cys-18. A lipid anchor (S-diacylglycerol cysteine) is attached at Cys-18.

Belongs to the EfeM/EfeO family.

The protein localises to the cell membrane. The polypeptide is Efem/EfeO family lipoprotein (Staphylococcus aureus (strain USA300)).